A 520-amino-acid polypeptide reads, in one-letter code: GMP synthase [glutamine-hydrolyzing] (520 aa).

Residues 3–200 (AIAIIDFGSQ…FLDIANCKRD (198 aa)) enclose the Glutamine amidotransferase type-1 domain. C84 (nucleophile) is an active-site residue. Catalysis depends on residues H175 and E177. One can recognise a GMPS ATP-PPase domain in the interval 201 to 386 (WTMKSFIEEQ…IGLSDEIIFQ (186 aa)). Residue 228 to 234 (SGGVDSS) participates in ATP binding.

In terms of assembly, homodimer.

The enzyme catalyses XMP + L-glutamine + ATP + H2O = GMP + L-glutamate + AMP + diphosphate + 2 H(+). Its pathway is purine metabolism; GMP biosynthesis; GMP from XMP (L-Gln route): step 1/1. Its function is as follows. Catalyzes the synthesis of GMP from XMP. This chain is GMP synthase [glutamine-hydrolyzing], found in Wolbachia pipientis wMel.